The primary structure comprises 358 residues: Dynein axonemal assembly factor 10 (358 aa).

WD repeat units lie at residues 64–106 (EKPK…TPVY), 116–155 (NCID…TPVA), 163–206 (EAKR…VRWE), 208–250 (NIKN…PTKG), 258–298 (AHKS…QRSR), and 320–358 (LSTQ…LNRL).

In terms of assembly, interacts with PIH1D1; the interaction associates DNAAF10 with the R2TP complex. Interacts with several dynein axonemal assembly factors.

Its subcellular location is the dynein axonemal particle. In terms of biological role, key assembly factor specifically required for the stability of axonemal dynein heavy chains in cytoplasm. This Xenopus laevis (African clawed frog) protein is Dynein axonemal assembly factor 10 (dnaaf10).